We begin with the raw amino-acid sequence, 249 residues long: Uridylate kinase (249 aa).

13–16 contributes to the ATP binding site; that stretch reads KLSG. Gly-55 provides a ligand contact to UMP. Gly-56 and Arg-60 together coordinate ATP. Residues Asp-75 and 136–143 contribute to the UMP site; that span reads IGNPFFTT. 3 residues coordinate ATP: Thr-163, Phe-169, and Asp-172.

It belongs to the UMP kinase family. Homohexamer.

Its subcellular location is the cytoplasm. It carries out the reaction UMP + ATP = UDP + ADP. It participates in pyrimidine metabolism; CTP biosynthesis via de novo pathway; UDP from UMP (UMPK route): step 1/1. Its activity is regulated as follows. Inhibited by UTP. Catalyzes the reversible phosphorylation of UMP to UDP. The protein is Uridylate kinase of Baumannia cicadellinicola subsp. Homalodisca coagulata.